The sequence spans 302 residues: tRNA-cytidine(32) 2-sulfurtransferase (302 aa).

Positions 44 to 49 match the PP-loop motif motif; sequence SGGKDS. [4Fe-4S] cluster-binding residues include Cys-119, Cys-122, and Cys-210.

It belongs to the TtcA family. Homodimer. Mg(2+) is required as a cofactor. [4Fe-4S] cluster serves as cofactor.

It localises to the cytoplasm. The catalysed reaction is cytidine(32) in tRNA + S-sulfanyl-L-cysteinyl-[cysteine desulfurase] + AH2 + ATP = 2-thiocytidine(32) in tRNA + L-cysteinyl-[cysteine desulfurase] + A + AMP + diphosphate + H(+). Its pathway is tRNA modification. Functionally, catalyzes the ATP-dependent 2-thiolation of cytidine in position 32 of tRNA, to form 2-thiocytidine (s(2)C32). The sulfur atoms are provided by the cysteine/cysteine desulfurase (IscS) system. This is tRNA-cytidine(32) 2-sulfurtransferase from Teredinibacter turnerae (strain ATCC 39867 / T7901).